A 362-amino-acid polypeptide reads, in one-letter code: Chorismate synthase (362 aa).

Positions 48 and 54 each coordinate NADP(+). Residues Arg131–Ser133, Asn243–Ala244, Gly287, Lys302–Ser306, and Arg328 contribute to the FMN site.

Belongs to the chorismate synthase family. As to quaternary structure, homotetramer. It depends on FMNH2 as a cofactor.

The enzyme catalyses 5-O-(1-carboxyvinyl)-3-phosphoshikimate = chorismate + phosphate. Its pathway is metabolic intermediate biosynthesis; chorismate biosynthesis; chorismate from D-erythrose 4-phosphate and phosphoenolpyruvate: step 7/7. Catalyzes the anti-1,4-elimination of the C-3 phosphate and the C-6 proR hydrogen from 5-enolpyruvylshikimate-3-phosphate (EPSP) to yield chorismate, which is the branch point compound that serves as the starting substrate for the three terminal pathways of aromatic amino acid biosynthesis. This reaction introduces a second double bond into the aromatic ring system. The sequence is that of Chorismate synthase from Rhodopseudomonas palustris (strain ATCC BAA-98 / CGA009).